Here is an 85-residue protein sequence, read N- to C-terminus: Thioredoxin (85 aa).

The Glutaredoxin domain occupies 1 to 85 (MSKVKIELFT…ALVEAIKKRL (85 aa)). Cys14 and Cys17 are joined by a disulfide.

This sequence belongs to the glutaredoxin family.

Its subcellular location is the cytoplasm. In terms of biological role, acts to maintain redox homeostasis; functions as a protein disulfide reductase. This chain is Thioredoxin (trx), found in Methanocaldococcus jannaschii (strain ATCC 43067 / DSM 2661 / JAL-1 / JCM 10045 / NBRC 100440) (Methanococcus jannaschii).